Reading from the N-terminus, the 60-residue chain is Movement protein TGBp3 (60 aa).

At M1 to W6 the chain is on the lumenal side. The helical transmembrane segment at V7 to K23 threads the bilayer. At P24–V60 the chain is on the cytoplasmic side.

It belongs to the Tymovirales TGBp3 protein family.

The protein resides in the host endoplasmic reticulum membrane. Plays a role in viral cell-to-cell propagation, by facilitating genome transport to neighboring plant cells through plasmosdesmata. May induce the formation of granular vesicles derived from the Endoplasmic reticulum, which align on actin filaments. The sequence is that of Movement protein TGBp3 from Citrus (ICRSV).